Here is a 95-residue protein sequence, read N- to C-terminus: Lipolysis-activating peptide 1-beta chain (95 aa).

The N-terminal stretch at Met-1–Gly-22 is a signal peptide. The LCN-type CS-alpha/beta domain occupies Gly-23–Pro-91. 3 disulfides stabilise this stretch: Cys-37-Cys-60, Cys-45-Cys-70, and Cys-49-Cys-72.

Homodimer; disulfide-linked or monomer (edited version) or heterodimer of an alpha chain (AC P84810) and this beta chain (non-edited version). As to expression, expressed by the venom gland.

It localises to the secreted. In terms of biological role, the homodimer inhibits HMG-CoA reductase (HMGCR) (32% of inhibition produced by 0.6 uM), a glycoprotein involved in the control of cholesterol biosynthesis. The inhibitory effects of bumarsin are seen at much lower concentrations (0.6 uM) than that for statins such as atorvastatin (5 mM) and simvastatin (10 uM). In addition to inhibition of HMG-CoA reductase, this protein lowers cholesterol levels by inducing steroid hormone synthesis via StAR, and by increasing reverse cholesterol transport mediated by the induction of ABCA1 and APOA1. The heterodimer non-edited LVP1 induces lipolysis in rat adipocytes. Induction of lipolysis by LVP1 appears to be mediated through the beta-2 adrenergic receptor pathway (ADRB2). Intracerebroventricular injection is not toxic to mice. Functionally, the monomer edited version, similar to alpha-toxins, may modulate voltage-gated sodium channels (Nav) and may block voltage-gated potassium channels (Kv). This Buthus occitanus tunetanus (Common European scorpion) protein is Lipolysis-activating peptide 1-beta chain.